The following is a 312-amino-acid chain: Putative S-adenosyl-L-methionine-dependent methyltransferase Mjls_0078 (312 aa).

Residues Asp134 and 163–164 contribute to the S-adenosyl-L-methionine site; that span reads DL.

It belongs to the UPF0677 family.

Functionally, exhibits S-adenosyl-L-methionine-dependent methyltransferase activity. The polypeptide is Putative S-adenosyl-L-methionine-dependent methyltransferase Mjls_0078 (Mycobacterium sp. (strain JLS)).